A 628-amino-acid chain; its full sequence is Phosphomethylpyrimidine synthase (628 aa).

Polar residues predominate over residues 1 to 14; the sequence is MTISDIGSQATTHT. A disordered region spans residues 1 to 37; sequence MTISDIGSQATTHTPVKASKADALKTPAHRSETDARF. Residues 19–37 show a composition bias toward basic and acidic residues; the sequence is SKADALKTPAHRSETDARF. Residues Asn260, Met289, Tyr318, His354, 374–376, 415–418, and Glu454 contribute to the substrate site; these read SRG and DGLR. Residue His458 coordinates Zn(2+). Residue Tyr481 participates in substrate binding. His522 is a Zn(2+) binding site. Positions 602, 605, and 610 each coordinate [4Fe-4S] cluster.

Belongs to the ThiC family. In terms of assembly, homodimer. The cofactor is [4Fe-4S] cluster.

The enzyme catalyses 5-amino-1-(5-phospho-beta-D-ribosyl)imidazole + S-adenosyl-L-methionine = 4-amino-2-methyl-5-(phosphooxymethyl)pyrimidine + CO + 5'-deoxyadenosine + formate + L-methionine + 3 H(+). It functions in the pathway cofactor biosynthesis; thiamine diphosphate biosynthesis. Functionally, catalyzes the synthesis of the hydroxymethylpyrimidine phosphate (HMP-P) moiety of thiamine from aminoimidazole ribotide (AIR) in a radical S-adenosyl-L-methionine (SAM)-dependent reaction. The protein is Phosphomethylpyrimidine synthase of Psychrobacter cryohalolentis (strain ATCC BAA-1226 / DSM 17306 / VKM B-2378 / K5).